A 247-amino-acid chain; its full sequence is T-cell surface glycoprotein CD8 alpha chain (247 aa).

Residues Met1 to Ala27 form the signal peptide. The Ig-like V-type domain maps to Lys28 to Phe139. Residues Lys28–Tyr196 lie on the Extracellular side of the membrane. Cys53 and Cys129 form a disulfide bridge. 3 N-linked (GlcNAc...) asparagine glycosylation sites follow: Asn69, Asn97, and Asn150. The disordered stretch occupies residues Pro156 to Gly182. A helical membrane pass occupies residues Ile197–Ile217. The Cytoplasmic portion of the chain corresponds to Cys218–Val247.

Forms disulfide-linked heterodimers with CD8B at the cell surface. Also forms homodimers in several cell types including NK-cells or peripheral blood T-lymphocytes. Interacts with the MHC class I HLA-A/B2M dimer. Interacts with LCK in a zinc-dependent manner. Palmitoylated, but association with CD8B seems to be more important for the enrichment of CdD8A in lipid rafts. In terms of processing, phosphorylated in cytotoxic T-lymphocytes (CTLs) following activation.

The protein localises to the cell membrane. Its function is as follows. Integral membrane glycoprotein that plays an essential role in the immune response and serves multiple functions in responses against both external and internal offenses. In T-cells, functions primarily as a coreceptor for MHC class I molecule:peptide complex. The antigens presented by class I peptides are derived from cytosolic proteins while class II derived from extracellular proteins. Interacts simultaneously with the T-cell receptor (TCR) and the MHC class I proteins presented by antigen presenting cells (APCs). In turn, recruits the Src kinase LCK to the vicinity of the TCR-CD3 complex. LCK then initiates different intracellular signaling pathways by phosphorylating various substrates ultimately leading to lymphokine production, motility, adhesion and activation of cytotoxic T-lymphocytes (CTLs). This mechanism enables CTLs to recognize and eliminate infected cells and tumor cells. In NK-cells, the presence of CD8A homodimers at the cell surface provides a survival mechanism allowing conjugation and lysis of multiple target cells. CD8A homodimer molecules also promote the survival and differentiation of activated lymphocytes into memory CD8 T-cells. The polypeptide is T-cell surface glycoprotein CD8 alpha chain (Cd8a) (Mus musculus (Mouse)).